We begin with the raw amino-acid sequence, 443 residues long: Probable glycine dehydrogenase (decarboxylating) subunit 1 (443 aa).

This sequence belongs to the GcvP family. N-terminal subunit subfamily. The glycine cleavage system is composed of four proteins: P, T, L and H. In this organism, the P 'protein' is a heterodimer of two subunits.

The catalysed reaction is N(6)-[(R)-lipoyl]-L-lysyl-[glycine-cleavage complex H protein] + glycine + H(+) = N(6)-[(R)-S(8)-aminomethyldihydrolipoyl]-L-lysyl-[glycine-cleavage complex H protein] + CO2. In terms of biological role, the glycine cleavage system catalyzes the degradation of glycine. The P protein binds the alpha-amino group of glycine through its pyridoxal phosphate cofactor; CO(2) is released and the remaining methylamine moiety is then transferred to the lipoamide cofactor of the H protein. The polypeptide is Probable glycine dehydrogenase (decarboxylating) subunit 1 (Koribacter versatilis (strain Ellin345)).